The following is a 760-amino-acid chain: Xaa-Pro dipeptidyl-peptidase (760 aa).

Active-site charge relay system residues include Ser349, Asp469, and His499.

Belongs to the peptidase S15 family. In terms of assembly, homodimer.

It localises to the cytoplasm. It catalyses the reaction Hydrolyzes Xaa-Pro-|- bonds to release unblocked, N-terminal dipeptides from substrates including Ala-Pro-|-p-nitroanilide and (sequentially) Tyr-Pro-|-Phe-Pro-|-Gly-Pro-|-Ile.. Its function is as follows. Removes N-terminal dipeptides sequentially from polypeptides having unsubstituted N-termini provided that the penultimate residue is proline. This Streptococcus pyogenes serotype M5 (strain Manfredo) protein is Xaa-Pro dipeptidyl-peptidase.